The following is a 442-amino-acid chain: tRNA-2-methylthio-N(6)-dimethylallyladenosine synthase (442 aa).

Residues 5-122 (KKVFIKTLGC…LPEMIKQKQK (118 aa)) enclose the MTTase N-terminal domain. Positions 14, 51, 85, 159, 163, and 166 each coordinate [4Fe-4S] cluster. A Radical SAM core domain is found at 145–378 (KAEGAKAYVS…DLLNSNAQII (234 aa)). The TRAM domain maps to 380–442 (RQMVGTNQRI…LPNSLRGELI (63 aa)).

It belongs to the methylthiotransferase family. MiaB subfamily. In terms of assembly, monomer. [4Fe-4S] cluster is required as a cofactor.

Its subcellular location is the cytoplasm. The catalysed reaction is N(6)-dimethylallyladenosine(37) in tRNA + (sulfur carrier)-SH + AH2 + 2 S-adenosyl-L-methionine = 2-methylsulfanyl-N(6)-dimethylallyladenosine(37) in tRNA + (sulfur carrier)-H + 5'-deoxyadenosine + L-methionine + A + S-adenosyl-L-homocysteine + 2 H(+). In terms of biological role, catalyzes the methylthiolation of N6-(dimethylallyl)adenosine (i(6)A), leading to the formation of 2-methylthio-N6-(dimethylallyl)adenosine (ms(2)i(6)A) at position 37 in tRNAs that read codons beginning with uridine. The sequence is that of tRNA-2-methylthio-N(6)-dimethylallyladenosine synthase from Francisella tularensis subsp. holarctica (strain FTNF002-00 / FTA).